The primary structure comprises 580 residues: MNYLVNYCKNSFYILIFISFTLFILSLKFLLMDLVYFIEWEIVSLHSMSIVMTFLFDWMSLMFMSFVLLISSLVIFYSDQYMGEDYNVNRFILLVLMFVMSMMMLIISPNLISILLGWDGLGLVSYCLVIYFQNVKSYNAGMLTALSNRIGDVALLLAIAWMLNYGSWNYIFYLDMMKNNFEMMVIGGLVMLAAMTKSAQIPFSSWLPAAMAAPTPVSALVHSSTLVTAGVYLLIRFNILLDNSKLGQFLLLVSGLTMFMAGLGANFEFDLKKIIALSTLSQLGLMMSILSIGYYKLAFFHLLTHALFKALLFMCAGVIIHNTKNAQDIRFMGGLSMSMPLTCSCFNIANLALCGMPFLAGFYSKDLILETVMLSYMNFFSFFLFFFSTGLTVCYSFRLVYYSMTGDFNSTTLNMLNDKGWTMSFSIFFLMVMAIIGGSMLSWLMFFNPEMICLPYYLKNLTLMVCLLGGFTGYLISNVNFFFINKSLVYYNFSFFSGSMWFMPLISTVGVVKWPLILGMYSYKMFDQGWSEYFGGQMLYNQLKIYSLYVQEFQNNNLKIYLLSYMLWVIILVSMMLFLN.

A run of 16 helical transmembrane segments spans residues 12–32, 50–70, 92–112, 113–133, 153–173, 176–196, 218–240, 249–269, 274–294, 300–320, 343–363, 378–400, 427–447, 464–484, 500–520, and 560–580; these read FYIL…FLLM, IVMT…VLLI, ILLV…PNLI, SILL…IYFQ, VALL…YIFY, MMKN…AAMT, SALV…FNIL, FLLL…NFEF, IIAL…SIGY, FHLL…GVII, CSCF…AGFY, NFFS…FRLV, IFFL…LMFF, MVCL…FFFI, MWFM…ILGM, and IYLL…LFLN.

It belongs to the complex I subunit 5 family.

It localises to the mitochondrion inner membrane. The catalysed reaction is a ubiquinone + NADH + 5 H(+)(in) = a ubiquinol + NAD(+) + 4 H(+)(out). Its function is as follows. Core subunit of the mitochondrial membrane respiratory chain NADH dehydrogenase (Complex I) that is believed to belong to the minimal assembly required for catalysis. Complex I functions in the transfer of electrons from NADH to the respiratory chain. The immediate electron acceptor for the enzyme is believed to be ubiquinone. The protein is NADH-ubiquinone oxidoreductase chain 5 of Aedes aegypti (Yellowfever mosquito).